A 286-amino-acid polypeptide reads, in one-letter code: Beta-lactamase TEM (286 aa).

The first 23 residues, 1–23 (MSIQHFRVALIPFFAAFCLPVFA), serve as a signal peptide directing secretion. Residue serine 68 is the Acyl-ester intermediate of the active site. An intrachain disulfide couples cysteine 75 to cysteine 121. Glutamate 166 acts as the Proton acceptor in catalysis. Residue 232–234 (KSG) participates in substrate binding.

This sequence belongs to the class-A beta-lactamase family.

It catalyses the reaction a beta-lactam + H2O = a substituted beta-amino acid. TEM-type are the most prevalent beta-lactamases in enterobacteria; they hydrolyze the beta-lactam bond in susceptible beta-lactam antibiotics, thus conferring resistance to penicillins and cephalosporins. TEM-3 and TEM-4 are capable of hydrolyzing cefotaxime and ceftazidime. TEM-5 is capable of hydrolyzing ceftazidime. TEM-6 is capable of hydrolyzing ceftazidime and aztreonam. TEM-8/CAZ-2, TEM-16/CAZ-7 and TEM-24/CAZ-6 are markedly active against ceftazidime. IRT-4 shows resistance to beta-lactamase inhibitors. This Escherichia coli protein is Beta-lactamase TEM (bla).